Reading from the N-terminus, the 200-residue chain is Large ribosomal subunit protein uL4 (200 aa).

Residues 42–65 (TRAQKTRSEVSGGGAKPWRQKGTG) form a disordered region.

The protein belongs to the universal ribosomal protein uL4 family. In terms of assembly, part of the 50S ribosomal subunit.

One of the primary rRNA binding proteins, this protein initially binds near the 5'-end of the 23S rRNA. It is important during the early stages of 50S assembly. It makes multiple contacts with different domains of the 23S rRNA in the assembled 50S subunit and ribosome. In terms of biological role, forms part of the polypeptide exit tunnel. In Vibrio vulnificus (strain CMCP6), this protein is Large ribosomal subunit protein uL4.